Consider the following 240-residue polypeptide: NAD-dependent protein deacylase Sir2 (240 aa).

A Deacetylase sirtuin-type domain is found at 1-235; it reads MQVTVLSGAG…PTLLQRLPEL (235 aa). 8–28 is a binding site for NAD(+); it reads GAGISAESGVPTFRDAETGLW. Substrate-binding residues include tyrosine 53 and arginine 56. Residue 86–89 coordinates NAD(+); it reads QNID. Histidine 104 acts as the Proton acceptor in catalysis. 4 residues coordinate Zn(2+): cysteine 112, cysteine 115, cysteine 138, and cysteine 140. NAD(+) is bound by residues 177 to 179, 203 to 205, and alanine 221; these read GTS and NPE.

Belongs to the sirtuin family. Class III subfamily. In terms of assembly, interacts with both Ku and LigD; may form a trimeric complex during NHEJ. The cofactor is Zn(2+).

The protein resides in the cytoplasm. It catalyses the reaction N(6)-succinyl-L-lysyl-[protein] + NAD(+) + H2O = 2''-O-succinyl-ADP-D-ribose + nicotinamide + L-lysyl-[protein]. The enzyme catalyses N(6)-acetyl-L-lysyl-[protein] + NAD(+) + H2O = 2''-O-acetyl-ADP-D-ribose + nicotinamide + L-lysyl-[protein]. NAD-dependent lysine deacetylase and desuccinylase that specifically removes acetyl and succinyl groups on target proteins. Modulates the activities of several proteins which are inactive in their acylated form. Its function is as follows. Involved in non-homologous end joining (NHEJ) repair of blunt, 5' overhang and 3' overhang DNA double strand breaks (DSB). Overexpression increases the efficiency of NHEJ of the above DSBs 2-fold with no effect on repair fidelity. The sequence is that of NAD-dependent protein deacylase Sir2 (sir2) from Mycolicibacterium smegmatis (strain ATCC 700084 / mc(2)155) (Mycobacterium smegmatis).